Reading from the N-terminus, the 300-residue chain is Folate-binding protein 1 (300 aa).

Residues 1–28 form the signal peptide; that stretch reads MGRCLTKKVFLIQSPILFLHLLISLSSG. Cystine bridges form between Cys38-Cys76, Cys68-Cys111, Cys77-Cys114, Cys102-Cys139, and Cys132-Cys178. Asn173 carries an N-linked (GlcNAc...) asparagine glycan. Residues 238–258 form a helical membrane-spanning segment; it reads MTTIQKISLGMSFLIAGMFLI.

It belongs to the folate receptor family. In terms of tissue distribution, expressed in leaves.

The protein localises to the membrane. Folic acid-binding protein involved in salicylic acid- (SA-) induced folate accumulation by triggering uptake and accumulation of folic acid in cells. May be implicated in the transport of the folates from the site of production (leaves) to the site of storage (fruits and seeds) and utilization (roots). This chain is Folate-binding protein 1, found in Arabidopsis thaliana (Mouse-ear cress).